Reading from the N-terminus, the 979-residue chain is Receptor-type tyrosine-protein phosphatase-like N (979 aa).

A signal peptide spans 1–34 (MRLPGRPGGPGGSGGLRVLLCLLLLGSRPGGCNA). The segment at 35 to 131 (ISAHGCLFDR…HPRDRSGLVP (97 aa)) is RESP18 homology domain. Residues 35-575 (ISAHGCLFDR…RPAHSTSPMR (541 aa)) lie on the Lumenal side of the membrane. Cysteine 53 and cysteine 62 are oxidised to a cystine. Basic and acidic residues predominate over residues 113–127 (IPRLRPPEPHPRDRS). Disordered regions lie at residues 113–171 (IPRL…GAGS), 248–272 (GSKGMFGAHPGHSYGDPPGPPPAQL), 285–332 (SQVP…EQPD), and 391–466 (EQVQ…STRP). 2 positions are modified to phosphoserine: serine 308 and serine 309. Pro residues predominate over residues 400–409 (EPPPPMPSLP). Residues 449–575 (SPLGQNQPTM…RPAHSTSPMR (127 aa)) are sufficient for dimerization of proICA512. A compositionally biased stretch (polar residues) spans 451–466 (LGQNQPTMAGQPSTRP). Residues asparagine 506 and asparagine 524 are each glycosylated (N-linked (GlcNAc...) asparagine). The helical transmembrane segment at 576–600 (SVLLTLVALAGVAGLLVALAVALCV) threads the bilayer. Residues 601-732 (RQHARQRDKE…PNTCATAQGE (132 aa)) are sufficient for dimerization of proICA512. Residues 601–979 (RQHARQRDKE…VNAILKALPQ (379 aa)) lie on the Cytoplasmic side of the membrane. The segment at 643 to 680 (NRAEGPPEPSRVSSVSSQFSDAAQASPSSHSSTPSWCE) is disordered. The segment covering 652 to 677 (SRVSSVSSQFSDAAQASPSSHSSTPS) has biased composition (low complexity). The 261-residue stretch at 709 to 969 (LAKEWQALCA…EFALTAVAEE (261 aa)) folds into the Tyrosine-protein phosphatase domain. Lysine 754 participates in a covalent cross-link: Glycyl lysine isopeptide (Lys-Gly) (interchain with G-Cter in SUMO).

The protein belongs to the protein-tyrosine phosphatase family. Receptor class 8 subfamily. As to quaternary structure, homodimer; shown for the unprocessed protein (proICA512) in the endoplasmic reticulum and resolved during protein maturation as ICA512-TMF seems to be predominantly monomeric in secretory granules; however, ICA512-CCF interacts with ICA512-TMF disrupting the ICA512-TMF:SNTB2 complex. The isolated lumenal RESP18 homology domain has been shown to form disulfide-linked homooligomers. Interacts (via cytoplasmic domain) with phosphorylated SNTB2; this protects PTPRN against cleavage by CAPN1 to produce ICA512-CCF. Dephosphorylation of SNTB2 upon insulin stimulation disrupts the interaction and results in PTPRN cleavage. Interacts with SNX19. ICA512-CCF interacts with PIAS4; in the nucleus. Interacts with STAT5B (phosphorylated); down-regulated by ICA512-CCF sumoylation; ICA512-CCF prevents STAT5B dephosphorylation; ICA512-CCF mediates interaction of STAT5B with PIAS4. Interacts (via RESP18 homology domain) with insulin and proinsulin. Interacts with PTPRN2, PTPRA and PTPRE. Post-translationally, N-glycosylated. In terms of processing, O-glycosylated. Subject to proteolytic cleavage at multiple sites. Subject to cleavage on a pair of basic residues. On exocytosis of secretory granules in pancreatic beta-cells ICA512-TMF is transiently inserted in the plasma-membrane and cleaved by mu-type calpain CPN1 to yield ICA512-CCF. Post-translationally, sumoylated at two sites including Lys-754. Sumoylation decreases interaction with STAT5. As to expression, detected in pituitary (at protein level).

Its subcellular location is the membrane. It is found in the cytoplasmic vesicle. It localises to the secretory vesicle membrane. The protein localises to the perikaryon. The protein resides in the cell projection. Its subcellular location is the axon. It is found in the synapse. It localises to the cell membrane. The protein localises to the endosome. The protein resides in the nucleus. In terms of biological role, plays a role in vesicle-mediated secretory processes. Required for normal accumulation of secretory vesicles in hippocampus, pituitary and pancreatic islets. Required for the accumulation of normal levels of insulin-containing vesicles and preventing their degradation. Plays a role in insulin secretion in response to glucose stimuli. Required for normal accumulation of the neurotransmitters norepinephrine, dopamine and serotonin in the brain. In females, but not in males, required for normal accumulation and secretion of pituitary hormones, such as luteinizing hormone (LH) and follicle-stimulating hormone (FSH). Required to maintain normal levels of renin expression and renin release. Seems to lack intrinsic enzyme activity. May regulate catalytic active protein-tyrosine phosphatases such as PTPRA through dimerization. Its function is as follows. ICA512-TMF regulates dynamics and exocytosis of insulin secretory granules (SGs); binding of ICA512-TMF to SNTB2/beta-2-syntrophin is proposed to restrain SGs mobility and exocytosis by tethering them to the actin cytoskeleton depending on UTRN; the function is inhibited by cytoplasmic ICA512-CFF dimerizing with ICA512-TMF and displacing SNTB2. ICA512-CCF translocated to the nucleus promotes expression of insulin and other granule-related genes; the function implicates binding to and regulating activity of STAT5B probably by preventing its dephosphorylation and potentially by inducing its sumoylation by recruiting PIAS4. Enhances pancreatic beta-cell proliferation by converging with signaling by STAT5B and STAT3. ICA512-CCF located in the cytoplasm regulates dynamics and exocytosis of insulin secretory granules (SGs) by dimerizing with ICA512-TMF and displacing SNTB2 thus enhancing SGs mobility and exocytosis. The sequence is that of Receptor-type tyrosine-protein phosphatase-like N (PTPRN) from Bos taurus (Bovine).